The chain runs to 330 residues: PDZ and LIM domain protein 4 (330 aa).

Residues 1–84 (MTHAVTLRGP…HLTLSVSRPE (84 aa)) enclose the PDZ domain. Disordered stretches follow at residues 104 to 154 (DPEA…NEVT) and 219 to 239 (EAGE…KPAA). Phosphoserine is present on residues serine 111, serine 115, serine 118, serine 119, serine 124, and serine 134. Polar residues predominate over residues 111 to 122 (SPATSRRSSISG). One can recognise an LIM zinc-binding domain in the interval 255–305 (CTRCGHGIVGTIVKARDKLYHPECFMCSDCGLNLKQRGYFFLDERLYCENH).

As to quaternary structure, homodimer. Interacts (via C-terminus only or via combined C-terminus and LIM domain, but not LIM domain only) with PTPN13 (via the second or fourth PDZ domains). Found in a complex with PTPN13 and TRIP6. Interacts (via PDZ domain) with ACTN1 and ACTN2 (via C-terminal SDL residues). Interacts (via PDZ domain) with TRIP6 (via the second LIM domain or via the third LIM domain plus C-terminus). Interacts (via LIM domain) with GRIA1 (via C-terminus); this interaction as well as the interaction with alpha-actinin is required for their colocalization in early endosomes. Interacts with PDLIM1. Forms (via LIM domain) a heterodimer with PDLIM3. Interacts directly with SRC (via kinase domain and to a lesser extent the SH2 domain). Phosphorylated on tyrosine residue(s). Can be dephosphorylated by PTPN13. As to expression, detected in several tissues, most prominent in brain and heart of adults. Expressed in embryonic fibroblasts.

The protein localises to the cytoplasm. Its subcellular location is the cytoskeleton. It localises to the cell projection. It is found in the dendritic spine. The protein resides in the early endosome membrane. The protein localises to the recycling endosome membrane. Its subcellular location is the nucleus. It localises to the perinuclear region. It is found in the lamellipodium. The protein resides in the synapse. The protein localises to the synaptosome. In terms of biological role, suppresses SRC activation by recognizing and binding to active SRC and facilitating PTPN13-mediated dephosphorylation of SRC 'Tyr-419' leading to its inactivation. Inactivated SRC dissociates from this protein allowing the initiation of a new SRC inactivation cycle. Involved in reorganization of the actin cytoskeleton. In nonmuscle cells, binds to ACTN1 (alpha-actinin-1), increases the affinity of ACTN1 to F-actin (filamentous actin), and promotes formation of actin stress fibers. Involved in regulation of the synaptic AMPA receptor transport in dendritic spines of hippocampal pyramidal neurons directing the receptors toward an insertion at the postsynaptic membrane. Links endosomal surface-internalized GRIA1-containing AMPA receptors to the alpha-actinin/actin cytoskeleton. Increases AMPA receptor-mediated excitatory postsynaptic currents in neurons. This Rattus norvegicus (Rat) protein is PDZ and LIM domain protein 4 (Pdlim4).